We begin with the raw amino-acid sequence, 332 residues long: Probable ABC transporter permease protein YphD (332 aa).

Helical transmembrane passes span 28 to 48 (GLLV…PGFI), 63 to 83 (IGIA…DVSV), 84 to 104 (GPMV…EVPL), 105 to 125 (AVAC…AGVL), 131 to 151 (VPSF…GLFM), 172 to 192 (FLGV…FVFI), 222 to 242 (VRIL…ILLA), 251 to 271 (GAAN…GTAL), 278 to 298 (LFGT…LVLL), and 303 to 323 (FFQQ…NILL).

It belongs to the binding-protein-dependent transport system permease family. AraH/RbsC subfamily.

It localises to the cell inner membrane. In terms of biological role, probably part of the binding-protein-dependent transport system YphDEF. Probably responsible for the translocation of the substrate across the membrane. In Escherichia coli (strain K12), this protein is Probable ABC transporter permease protein YphD (yphD).